The sequence spans 165 residues: E3 ubiquitin-protein ligase RNF181 (165 aa).

The RING-type; atypical zinc-finger motif lies at 88-129 (CPVCLLEFEEEETVIEMPCHHLFHSNCILPWLSKTNSCPLCR). Residues 136-165 (DDSYEEHKKDKARRQQQQHRLENLHGAMYT) form a disordered region. T165 is modified (phosphothreonine).

Belongs to the RNF181 family. In terms of assembly, directly interacts with ITGA2B and, as a result, with integrin ITGA2B/ITGB3. There is no evidence that integrin ITGA2B/ITGB3 is an endogenous substrate for RNF181-directed ubiquitination. In terms of processing, auto-ubiquitinated as part of the enzymatic reaction.

It carries out the reaction S-ubiquitinyl-[E2 ubiquitin-conjugating enzyme]-L-cysteine + [acceptor protein]-L-lysine = [E2 ubiquitin-conjugating enzyme]-L-cysteine + N(6)-ubiquitinyl-[acceptor protein]-L-lysine.. Its pathway is protein modification; protein ubiquitination. Functionally, E3 ubiquitin-protein ligase which accepts ubiquitin from an E2 ubiquitin-conjugating enzyme in the form of a thioester and then directly transfers the ubiquitin to targeted substrates. Catalyzes monoubiquitination of 26S proteasome subunit PSMC2/RPT1. The polypeptide is E3 ubiquitin-protein ligase RNF181 (Rnf181) (Rattus norvegicus (Rat)).